Consider the following 368-residue polypeptide: MNSSRTRVAVIFGGRSNEHSVSCVSAGSVLSNLDPDRYDVVPIGITVDGSWVLGSSDPSSLAISGRALPSVDKDGTSVVLSADPTREGEVISFDGSDAGAVLASVDVVFPVLHGAYGEDGTIQGLLELAGVPYVGPGVLASAAGMDKEFTKKLLAAEGLPVGVQVVLRPGIATLTEEQKAELGLPVFVKPARGGSSIGITRVSNWDGLDGAIAHARLHDPKVIVEGAIIGREVECGVLEFPNGDVKASVVAEIRMPDADTDSDAFYDFDTKYLDDVCEFDIPAKLDESVSDQIRELAVRAFKALDCQGLSRVDFFVTADGPVINEINTMPGFTSISMYPKMWNATGIDYRTLISTLVDTAIARGTGLR.

The region spanning 151-358 (KKLLAAEGLP…YRTLISTLVD (208 aa)) is the ATP-grasp domain. Position 179-234 (179-234 (KAELGLPVFVKPARGGSSIGITRVSNWDGLDGAIAHARLHDPKVIVEGAIIGREVE)) interacts with ATP. Asp-313, Glu-325, and Asn-327 together coordinate Mg(2+).

The protein belongs to the D-alanine--D-alanine ligase family. Requires Mg(2+) as cofactor. It depends on Mn(2+) as a cofactor.

The protein localises to the cytoplasm. The catalysed reaction is 2 D-alanine + ATP = D-alanyl-D-alanine + ADP + phosphate + H(+). Its pathway is cell wall biogenesis; peptidoglycan biosynthesis. Functionally, cell wall formation. The chain is D-alanine--D-alanine ligase from Rhodococcus erythropolis (strain PR4 / NBRC 100887).